A 422-amino-acid chain; its full sequence is UDP-N-acetylglucosamine 1-carboxyvinyltransferase (422 aa).

22-23 (KN) is a phosphoenolpyruvate binding site. Arg-93 lines the UDP-N-acetyl-alpha-D-glucosamine pocket. Cys-117 acts as the Proton donor in catalysis. A 2-(S-cysteinyl)pyruvic acid O-phosphothioketal modification is found at Cys-117. UDP-N-acetyl-alpha-D-glucosamine is bound by residues 122–126 (RPVDL), Asp-308, and Leu-330.

Belongs to the EPSP synthase family. MurA subfamily.

Its subcellular location is the cytoplasm. It catalyses the reaction phosphoenolpyruvate + UDP-N-acetyl-alpha-D-glucosamine = UDP-N-acetyl-3-O-(1-carboxyvinyl)-alpha-D-glucosamine + phosphate. It functions in the pathway cell wall biogenesis; peptidoglycan biosynthesis. Functionally, cell wall formation. Adds enolpyruvyl to UDP-N-acetylglucosamine. The polypeptide is UDP-N-acetylglucosamine 1-carboxyvinyltransferase (Helicobacter pylori (strain Shi470)).